The primary structure comprises 217 residues: Probable transaldolase (217 aa).

The active-site Schiff-base intermediate with substrate is the Lys83.

The protein belongs to the transaldolase family. Type 3B subfamily.

It localises to the cytoplasm. The catalysed reaction is D-sedoheptulose 7-phosphate + D-glyceraldehyde 3-phosphate = D-erythrose 4-phosphate + beta-D-fructose 6-phosphate. The protein operates within carbohydrate degradation; pentose phosphate pathway; D-glyceraldehyde 3-phosphate and beta-D-fructose 6-phosphate from D-ribose 5-phosphate and D-xylulose 5-phosphate (non-oxidative stage): step 2/3. Transaldolase is important for the balance of metabolites in the pentose-phosphate pathway. This is Probable transaldolase from Coprothermobacter proteolyticus (strain ATCC 35245 / DSM 5265 / OCM 4 / BT).